The sequence spans 425 residues: UPF0597 protein VFMJ11_0655 (425 aa).

Belongs to the UPF0597 family.

The polypeptide is UPF0597 protein VFMJ11_0655 (Aliivibrio fischeri (strain MJ11) (Vibrio fischeri)).